The following is a 274-amino-acid chain: Methionine aminopeptidase B (274 aa).

Histidine 102 is a binding site for substrate. 3 residues coordinate a divalent metal cation: aspartate 120, aspartate 131, and histidine 194. Histidine 201 serves as a coordination point for substrate. A divalent metal cation is bound by residues glutamate 227 and glutamate 258.

It belongs to the peptidase M24A family. Methionine aminopeptidase type 1 subfamily. In terms of assembly, monomer. Co(2+) serves as cofactor. Requires Zn(2+) as cofactor. It depends on Mn(2+) as a cofactor. Fe(2+) is required as a cofactor.

The enzyme catalyses Release of N-terminal amino acids, preferentially methionine, from peptides and arylamides.. In terms of biological role, removes the N-terminal methionine from nascent proteins. The N-terminal methionine is often cleaved when the second residue in the primary sequence is small and uncharged (Met-Ala-, Cys, Gly, Pro, Ser, Thr, or Val). Requires deformylation of the N(alpha)-formylated initiator methionine before it can be hydrolyzed. This Synechocystis sp. (strain ATCC 27184 / PCC 6803 / Kazusa) protein is Methionine aminopeptidase B.